Consider the following 345-residue polypeptide: Baculoviral IAP repeat-containing protein 7-B (345 aa).

BIR repeat units follow at residues 46–112 (RQRS…PFLQ) and 154–219 (RLGS…DFLL). Residues cysteine 188, cysteine 191, histidine 208, and cysteine 215 each coordinate Zn(2+). Serine 237 bears the Phosphoserine mark. Serine 241 is modified (phosphoserine; by MAPK1). Residue serine 253 is modified to Phosphoserine. Serine 257 is subject to Phosphoserine; by MAPK1. The segment at 258–286 (TESVSVPRAPTPGERSEPPKVSGPPLSTE) is disordered. Residues 298–333 (CKVCMDKDVSMLFVPCGHLVVCTECAPNLRHCPICR) form an RING-type zinc finger.

It belongs to the IAP family. Auto-ubiquitinated, and degraded in a 2-step mechanism; a caspase-independent first step and a caspase-dependent second step. Post-translationally, phosphorylated via MAPK-dependent and CDK-dependent pathways during oocyte maturation. Phosphorylation does not appear to affect caspase inhibition or autoubiquitination activity.

It localises to the cytoplasm. The catalysed reaction is S-ubiquitinyl-[E2 ubiquitin-conjugating enzyme]-L-cysteine + [acceptor protein]-L-lysine = [E2 ubiquitin-conjugating enzyme]-L-cysteine + N(6)-ubiquitinyl-[acceptor protein]-L-lysine.. In terms of biological role, weak apoptotic suppressor. Has E3 ubiquitin-protein ligase activity. Weak inhibitor of caspase activity. The sequence is that of Baculoviral IAP repeat-containing protein 7-B (birc7-b) from Xenopus laevis (African clawed frog).